Consider the following 283-residue polypeptide: NAD kinase (283 aa).

The Proton acceptor role is filled by aspartate 67. NAD(+) is bound by residues 67-68, 141-142, arginine 152, aspartate 171, 182-187, and glutamine 241; these read DG, ND, and TAYSLS.

Belongs to the NAD kinase family. Requires a divalent metal cation as cofactor.

The protein localises to the cytoplasm. The enzyme catalyses NAD(+) + ATP = ADP + NADP(+) + H(+). Its function is as follows. Involved in the regulation of the intracellular balance of NAD and NADP, and is a key enzyme in the biosynthesis of NADP. Catalyzes specifically the phosphorylation on 2'-hydroxyl of the adenosine moiety of NAD to yield NADP. This is NAD kinase from Heliobacterium modesticaldum (strain ATCC 51547 / Ice1).